The primary structure comprises 118 residues: Vesicle-associated membrane protein 1 (118 aa).

The segment at 1–36 (MSAPAQPPAEGTEGTAPGGGPPGPPPNMTSNRRLQQ) is disordered. The Cytoplasmic segment spans residues 1–96 (MSAPAQPPAE…KRKYWWKNCK (96 aa)). The 61-residue stretch at 33-93 (RLQQTQAQVE…AKLKRKYWWK (61 aa)) folds into the v-SNARE coiled-coil homology domain. Serine 63 is modified (phosphoserine). Residues 97 to 116 (MMIMLGAICAIIVVVIVIYF) traverse the membrane as a helical; Anchor for type IV membrane protein segment. Residues 117–118 (FT) are Vesicular-facing.

The protein belongs to the synaptobrevin family. Interacts with VAPA and VAPB. Post-translationally, (Microbial infection) Targeted and hydrolyzed by C.botulinum neurotoxin type B (BoNT/B, botB) which probably hydrolyzes the 78-Gln-|-Phe-79 bond and inhibits neurotransmitter release. (Microbial infection) Targeted and hydrolyzed by C.botulinum neurotoxin type D (BoNT/D, botD) which probably hydrolyzes the 61-Arg-|-Leu-62 bond and inhibits neurotransmitter release. BoNT/D has low catalytic activity on this protein due to its sequence. Note that humans are not known to be infected by C.botulinum type D. In terms of processing, (Microbial infection) Targeted and hydrolyzed by C.botulinum neurotoxin type F (BoNT/F, botF) which probably hydrolyzes the 60-Gln-|-Lys-61 bond and inhibits neurotransmitter release. Post-translationally, (Microbial infection) Targeted and hydrolyzed by C.botulinum neurotoxin type X (BoNT/X) which probably hydrolyzes the 68-Arg-|-Ala-69 bond and inhibits neurotransmitter release. It remains unknown whether BoNT/X is ever produced, or what organisms it targets. Nervous system, skeletal muscle and adipose tissue.

The protein localises to the cytoplasmic vesicle. It localises to the secretory vesicle. The protein resides in the synaptic vesicle membrane. It is found in the synapse. Its subcellular location is the synaptosome. The protein localises to the cytoplasmic vesicle membrane. It localises to the mitochondrion outer membrane. Its function is as follows. Involved in the targeting and/or fusion of transport vesicles to their target membrane. The chain is Vesicle-associated membrane protein 1 (VAMP1) from Homo sapiens (Human).